The primary structure comprises 535 residues: Suppressor of cytokine signaling 6 (535 aa).

Residues 80-89 (RLSAKQKSKG) are compositionally biased toward basic residues. Residues 80–105 (RLSAKQKSKGKAGTPSGSSADEDTFS) are disordered. One can recognise an SH2 domain in the interval 384–491 (WYWGPITRWE…TYPVRLTNPV (108 aa)). An SOCS box domain is found at 486 to 535 (RLTNPVSRFMQVRSLQYLCRFVIRQYTRIDLIQKLPLPNKMKDYLQEKHY).

Interacts with RBCK1. Interacts with phosphorylated IRS4. Interacts with PIM3. Interacts with KIT (phosphorylated).

Its pathway is protein modification; protein ubiquitination. SOCS family proteins form part of a classical negative feedback system that regulates cytokine signal transduction. May be a substrate recognition component of a SCF-like ECS (Elongin BC-CUL2/5-SOCS-box protein) E3 ubiquitin-protein ligase complex which mediates the ubiquitination and subsequent proteasomal degradation of target proteins. Regulates KIT degradation by ubiquitination of the tyrosine-phosphorylated receptor. The sequence is that of Suppressor of cytokine signaling 6 (SOCS6) from Homo sapiens (Human).